A 1524-amino-acid chain; its full sequence is DNA-directed RNA polymerase subunit beta' (1524 aa).

Zn(2+) contacts are provided by Cys-58, Cys-60, Cys-73, and Cys-76. Positions 739, 741, and 743 each coordinate Mg(2+). Zn(2+)-binding residues include Cys-1112, Cys-1194, Cys-1201, and Cys-1204. The segment at 1502–1524 is disordered; that stretch reads AVEAKEKEAPRRPVRREQPGKGL.

The protein belongs to the RNA polymerase beta' chain family. As to quaternary structure, the RNAP catalytic core consists of 2 alpha, 1 beta, 1 beta' and 1 omega subunit. When a sigma factor is associated with the core the holoenzyme is formed, which can initiate transcription. Requires Mg(2+) as cofactor. Zn(2+) serves as cofactor.

The catalysed reaction is RNA(n) + a ribonucleoside 5'-triphosphate = RNA(n+1) + diphosphate. In terms of biological role, DNA-dependent RNA polymerase catalyzes the transcription of DNA into RNA using the four ribonucleoside triphosphates as substrates. This chain is DNA-directed RNA polymerase subunit beta', found in Thermus aquaticus.